We begin with the raw amino-acid sequence, 453 residues long: Dibenzothiophene-sulfone monooxygenase (453 aa).

The FMN site is built by aspartate 59, threonine 106, histidine 156, tyrosine 160, and serine 231.

The protein belongs to the NtaA/SnaA/DszA monooxygenase family. Homodimer.

Its subcellular location is the cytoplasm. It carries out the reaction dibenzothiophene 5,5-dioxide + FMNH2 + NADH + O2 = 2'-hydroxybiphenyl-2-sulfinate + FMN + NAD(+) + H2O + H(+). Its pathway is sulfur metabolism; dibenzothiophene degradation. Its function is as follows. Catalyzes the second step of the '4S' desulfurization pathway that removes covalently bound sulfur from dibenzothiophene (DBT) without breaking carbon-carbon bonds. Metabolizes DBT-sulfone (DBTO2 or DBT 5,5-dioxide) to 2-(2'-hydroxyphenyl)benzene sulphinate (HBPS). In Rhodococcus erythropolis (strain XP), this protein is Dibenzothiophene-sulfone monooxygenase.